Consider the following 246-residue polypeptide: DNA repair protein RecO (246 aa).

The protein belongs to the RecO family.

In terms of biological role, involved in DNA repair and RecF pathway recombination. This chain is DNA repair protein RecO, found in Pelobacter propionicus (strain DSM 2379 / NBRC 103807 / OttBd1).